A 159-amino-acid chain; its full sequence is Protein SPA, chloroplastic (159 aa).

Residues 1 to 47 (MLTAPSLSRFKSPFISSPLKLPTLSSSFFTQKFHQTCRRRNSYPCIK) constitute a chloroplast transit peptide. The helical transmembrane segment at 56-76 (VIAITVGVLSVAIGVGIPVFY) threads the bilayer. The CR-type-like stretch occupies residues 85–145 (KRENTQPCFP…TCTTCQGSGI (61 aa)). 4 CXXCXGXG motif repeats span residues 92 to 99 (CFPCTGTG), 103 to 110 (CRFCMGTG), 126 to 133 (CINCDGAG), and 137 to 144 (CTTCQGSG).

In terms of tissue distribution, expressed in source leaves. Lower levels of expression in fruits and stems.

It is found in the plastid. The protein resides in the chloroplast thylakoid membrane. Its function is as follows. Participates in determining harvest index (HI) by affecting source-sink carbon distribution. Up-regulates the conversion of fixed carbon to exportable sugars. The chain is Protein SPA, chloroplastic from Solanum lycopersicum (Tomato).